The following is a 294-amino-acid chain: tRNA dimethylallyltransferase (294 aa).

Position 10–17 (10–17 (GPTAVGKT)) interacts with ATP. A substrate-binding site is contributed by 12–17 (TAVGKT). The interaction with substrate tRNA stretch occupies residues 35–38 (DSQQ).

This sequence belongs to the IPP transferase family. In terms of assembly, monomer. The cofactor is Mg(2+).

It carries out the reaction adenosine(37) in tRNA + dimethylallyl diphosphate = N(6)-dimethylallyladenosine(37) in tRNA + diphosphate. Functionally, catalyzes the transfer of a dimethylallyl group onto the adenine at position 37 in tRNAs that read codons beginning with uridine, leading to the formation of N6-(dimethylallyl)adenosine (i(6)A). The polypeptide is tRNA dimethylallyltransferase (Streptococcus gordonii (strain Challis / ATCC 35105 / BCRC 15272 / CH1 / DL1 / V288)).